A 239-amino-acid polypeptide reads, in one-letter code: Small ribosomal subunit protein eS4 (239 aa).

One can recognise an S4 RNA-binding domain in the interval 37-99 (IPLAVVIRDY…ADLYFRVIPD (63 aa)).

This sequence belongs to the eukaryotic ribosomal protein eS4 family.

This Saccharolobus islandicus (strain Y.N.15.51 / Yellowstone #2) (Sulfolobus islandicus) protein is Small ribosomal subunit protein eS4.